The sequence spans 70 residues: MIARLLILIARAWQLGPSRVLPPTCRYAPSCSEYAIVALRRHGAIKGGWIATKRLLRCHPWGGHGYDPVP.

This sequence belongs to the UPF0161 family.

It localises to the cell inner membrane. Its function is as follows. Could be involved in insertion of integral membrane proteins into the membrane. The chain is Putative membrane protein insertion efficiency factor from Sphingopyxis alaskensis (strain DSM 13593 / LMG 18877 / RB2256) (Sphingomonas alaskensis).